The chain runs to 170 residues: uncharacterized protein (170 aa).

Helical transmembrane passes span 21–41 (NISLFGCLLVLSAGIIFAAVL), 55–75 (AYTSVSIVLGTITTLPFTLLL), 86–106 (TGIAGLLYLAIGCSWLAYWLW), 117–137 (ISGVLVALEPLFGILFAVSLL), and 143–163 (FSAALGITIIMLATLGSTLLP). The EamA domain maps to 35–161 (IIFAAVLRWT…IMLATLGSTL (127 aa)).

It belongs to the EamA transporter family.

Its subcellular location is the cell membrane. This is an uncharacterized protein from Haemophilus influenzae (strain ATCC 51907 / DSM 11121 / KW20 / Rd).